Here is a 457-residue protein sequence, read N- to C-terminus: Multidrug resistance protein MdtK (457 aa).

A run of 12 helical transmembrane segments spans residues 11–31, 53–73, 93–113, 127–147, 160–180, 189–209, 243–263, 276–296, 314–334, 350–370, 387–407, and 418–438; these read LLALAIPVILAQIAQTAMGFV, IWLPAILFGHGLLLALTPVIA, WLAGFVSVLIMLVLWNAGYII, AVGYLRALLWGAPGYLFFQVA, GMVMGFIGLLVNIPVNYIFIY, GGVGCGVATAAVYWVMFLAMV, LPIALALFFEVTLFAVVALLV, IALNFSSLMFVLPMSLAAAVT, AARTGLMVGVCMATLTAIFTV, VVTLAAHLMLLAAVYQISDSI, IFYITFTAYWVLGLPSGYILA, and PAGFWIGFIIGLTSAAIMMML.

The protein belongs to the multi antimicrobial extrusion (MATE) (TC 2.A.66.1) family. MdtK subfamily.

It is found in the cell inner membrane. Functionally, multidrug efflux pump that functions probably as a Na(+)/drug antiporter. In Escherichia coli O139:H28 (strain E24377A / ETEC), this protein is Multidrug resistance protein MdtK.